We begin with the raw amino-acid sequence, 188 residues long: Protein GrpE (188 aa).

Residues 1–16 (MEERNEQVVEEVKEAQ) show a composition bias toward basic and acidic residues. A disordered region spans residues 1 to 31 (MEERNEQVVEEVKEAQVEEAVTPENSEETVE).

The protein belongs to the GrpE family. Homodimer.

The protein resides in the cytoplasm. Its function is as follows. Participates actively in the response to hyperosmotic and heat shock by preventing the aggregation of stress-denatured proteins, in association with DnaK and GrpE. It is the nucleotide exchange factor for DnaK and may function as a thermosensor. Unfolded proteins bind initially to DnaJ; upon interaction with the DnaJ-bound protein, DnaK hydrolyzes its bound ATP, resulting in the formation of a stable complex. GrpE releases ADP from DnaK; ATP binding to DnaK triggers the release of the substrate protein, thus completing the reaction cycle. Several rounds of ATP-dependent interactions between DnaJ, DnaK and GrpE are required for fully efficient folding. The polypeptide is Protein GrpE (Bacillus anthracis).